The chain runs to 666 residues: uncharacterized protein (666 aa).

The protein belongs to the MG032/MG096/MG288 family.

This is an uncharacterized protein from Mycoplasma genitalium (strain ATCC 33530 / DSM 19775 / NCTC 10195 / G37) (Mycoplasmoides genitalium).